Consider the following 340-residue polypeptide: GTP 3',8-cyclase (340 aa).

Positions 20-246 constitute a Radical SAM core domain; that stretch reads RFERQYVYLR…PKALSDGPAK (227 aa). Position 29 (arginine 29) interacts with GTP. [4Fe-4S] cluster-binding residues include cysteine 36 and cysteine 40. Tyrosine 42 is an S-adenosyl-L-methionine binding site. A [4Fe-4S] cluster-binding site is contributed by cysteine 43. Arginine 79 provides a ligand contact to GTP. Glycine 83 serves as a coordination point for S-adenosyl-L-methionine. Threonine 110 is a binding site for GTP. Residue serine 134 coordinates S-adenosyl-L-methionine. Lysine 171 is a GTP binding site. Position 205 (methionine 205) interacts with S-adenosyl-L-methionine. The [4Fe-4S] cluster site is built by cysteine 268 and cysteine 271. Position 273 to 275 (273 to 275) interacts with GTP; the sequence is RLR. Cysteine 285 is a [4Fe-4S] cluster binding site.

The protein belongs to the radical SAM superfamily. MoaA family. In terms of assembly, monomer and homodimer. It depends on [4Fe-4S] cluster as a cofactor.

It carries out the reaction GTP + AH2 + S-adenosyl-L-methionine = (8S)-3',8-cyclo-7,8-dihydroguanosine 5'-triphosphate + 5'-deoxyadenosine + L-methionine + A + H(+). The protein operates within cofactor biosynthesis; molybdopterin biosynthesis. In terms of biological role, catalyzes the cyclization of GTP to (8S)-3',8-cyclo-7,8-dihydroguanosine 5'-triphosphate. This is GTP 3',8-cyclase from Actinobacillus pleuropneumoniae serotype 7 (strain AP76).